Here is a 352-residue protein sequence, read N- to C-terminus: Uroporphyrinogen decarboxylase (352 aa).

Residues 27 to 31 (RQAGR), Asp77, Tyr154, Thr209, and His325 each bind substrate.

The protein belongs to the uroporphyrinogen decarboxylase family. Homodimer.

Its subcellular location is the cytoplasm. The catalysed reaction is uroporphyrinogen III + 4 H(+) = coproporphyrinogen III + 4 CO2. It functions in the pathway porphyrin-containing compound metabolism; protoporphyrin-IX biosynthesis; coproporphyrinogen-III from 5-aminolevulinate: step 4/4. Its function is as follows. Catalyzes the decarboxylation of four acetate groups of uroporphyrinogen-III to yield coproporphyrinogen-III. The chain is Uroporphyrinogen decarboxylase from Legionella pneumophila (strain Lens).